Consider the following 215-residue polypeptide: NADH-quinone oxidoreductase subunit C (215 aa).

It belongs to the complex I 30 kDa subunit family. As to quaternary structure, NDH-1 is composed of 14 different subunits. Subunits NuoB, C, D, E, F, and G constitute the peripheral sector of the complex.

It localises to the cell inner membrane. The catalysed reaction is a quinone + NADH + 5 H(+)(in) = a quinol + NAD(+) + 4 H(+)(out). NDH-1 shuttles electrons from NADH, via FMN and iron-sulfur (Fe-S) centers, to quinones in the respiratory chain. The immediate electron acceptor for the enzyme in this species is believed to be ubiquinone. Couples the redox reaction to proton translocation (for every two electrons transferred, four hydrogen ions are translocated across the cytoplasmic membrane), and thus conserves the redox energy in a proton gradient. The polypeptide is NADH-quinone oxidoreductase subunit C (Methylobacterium radiotolerans (strain ATCC 27329 / DSM 1819 / JCM 2831 / NBRC 15690 / NCIMB 10815 / 0-1)).